A 162-amino-acid chain; its full sequence is Single-stranded DNA-binding protein 1 (162 aa).

The SSB domain occupies 5 to 110 (LNKVMLIGHL…IVCTDMQMLG (106 aa)). Positions 110-162 (GAKDSGGGTSDASYSQNRPSYSRPSRPEPSSGNYGASPSSGGAQEFEKDDLPF) are disordered. Residues 122 to 140 (SYSQNRPSYSRPSRPEPSS) are compositionally biased toward low complexity. Over residues 141 to 151 (GNYGASPSSGG) the composition is skewed to polar residues.

Homotetramer.

In Chlorobaculum tepidum (strain ATCC 49652 / DSM 12025 / NBRC 103806 / TLS) (Chlorobium tepidum), this protein is Single-stranded DNA-binding protein 1 (ssb1).